Consider the following 485-residue polypeptide: Outer membrane protein OprM (485 aa).

The first 17 residues, 1–17 (MKRSFLSLAVAAVVLSG), serve as a signal peptide directing secretion. Cys-18 is lipidated: N-palmitoyl cysteine. Cys-18 is lipidated: S-diacylglycerol cysteine.

The protein belongs to the outer membrane factor (OMF) (TC 1.B.17) family. In terms of assembly, component of the MexAB-OprM multidrug efflux complex, composed of six MexA subunits forming a hexameric tube, binding to a MexB trimer, which interact with the trimeric OprM outer membrane channel protein. The OprM homotrimer forms a 135 Angstroms-long pore. It consists of a beta-barrel, which is probably inserted in the outer membrane, and an alpha-barrel formed by alpha-helices which probably spans the periplasm. In the ground state the periplasmic end is closed, while the outer membrane end opening is 6-8 Angstroms in diameter. OprM does not directly contact MexB; instead, MexA joins MexB and OprM by forming a funnel-like hexamer anchored to the inner membrane. MexA may initially form a hexameric ring complex with MexB prior to OprM, then OprM undergoes a conformational change as it contacts MexA, allowing the periplasmic gate to open. It is thought that, under high intracellular substrate concentration, MexB ejects substrate into the tunnel formed by MexA-OprM; as the substrate level declines, conformational changes in MexB cause efflux to reduce and stop and the complex shifts to the closed state. MexB subunit acts as a substrate:proton antiporter and activity is enhanced significantly when in complex with MexA and OprM, in vitro.

The protein resides in the cell outer membrane. With respect to regulation, export of antibiotics and solvents is dramatically decreased in the presence of the protonophore carbonyl cyanide m-chlorophenylhydrazone (CCCP), therefore may be driven by a proton gradient. Antibiotic efflux is inhibited by pyridopyrimidine derivatives, such as ABI-PP, acting by binding to a hydrophobic pocket in MexB. Its function is as follows. The outer membrane component of the MexAB-OprM efflux system that confers multidrug resistance. Functions as the major efflux pump for n-hexane and p-xylene efflux. Has been shown in one study to be involved in the active efflux of the autoinducer N-(3-oxododecanoyl) homoserine lactone, thereby playing an indirect role in quorum-sensing; but has been shown in another study not to be involved in efflux of this autoinducer. Over-expression of the pump increases antibiotic and solvent efflux capacities. Can replace the OprJ outer membrane component of the MexCD-OprJ pump; the antibiotics exported are those exported by the intact MexCD pump, showing that efflux substrate specificity is not conferred by this component. Serves as the outer membrane component for the MexXY efflux system. Implicated in the secretion of the siderophore pyoverdine. OprM is probably involved in the efflux of the siderophore across the outer membrane. In Pseudomonas aeruginosa (strain ATCC 15692 / DSM 22644 / CIP 104116 / JCM 14847 / LMG 12228 / 1C / PRS 101 / PAO1), this protein is Outer membrane protein OprM (oprM).